Reading from the N-terminus, the 477-residue chain is Tripartite motif-containing protein 72 (477 aa).

16 residues coordinate Zn(2+): leucine 14, glutamine 17, proline 29, cysteine 31, threonine 34, glutamine 37, threonine 53, proline 56, glycine 86, leucine 89, valine 97, glutamate 100, leucine 105, glycine 108, glycine 114, and lysine 117. Residues 16 to 59 form an RING-type zinc finger; it reads CQLCLELFRAPVTPECGHTFCQGCLTGVPKNQDQNGSTPCPTCQ. The B box-type zinc-finger motif lies at 83–124; it reads VPQGHCLEHMDPLSVYCEQDKELICGVCASLGKHKGHNIITA. Positions 135–232 form a coiled coil; it reads LPQQQVILQE…QMEGVLKDVE (98 aa). The B30.2/SPRY domain occupies 272–476; sequence DEFKFQVWRK…LKIFYPPAEQ (205 aa).

Belongs to the TRIM/RBCC family. As to quaternary structure, homodimer. Homooligomer; disulfide-linked. Oligomerizes on the phospholipid membrane. Post-translationally, disulfide bond formation at Cys-244 occurs in case of membrane damage that cause the entry of the oxidized milieu of the extracellular space, resulting in homooligomerization.

Its subcellular location is the cell membrane. The protein resides in the sarcolemma. It localises to the cytoplasmic vesicle membrane. The enzyme catalyses S-ubiquitinyl-[E2 ubiquitin-conjugating enzyme]-L-cysteine + [acceptor protein]-L-lysine = [E2 ubiquitin-conjugating enzyme]-L-cysteine + N(6)-ubiquitinyl-[acceptor protein]-L-lysine.. It participates in protein modification; protein ubiquitination. Its activity is regulated as follows. Specifically binds phosphatidylserine. The binding to phospholipids enhances ubiquitination activity. Functionally, muscle-specific E3 ubiquitin-protein ligase that plays a central role in cell membrane repair by nucleating the assembly of the repair machinery at injury sites. Acts as a sensor of oxidation: upon membrane damage, entry of extracellular oxidative environment results in disulfide bond formation and homooligomerization at the injury site. This oligomerization acts as a nucleation site for recruitment of TRIM72-containing vesicles to the injury site, leading to membrane patch formation. Probably acts upstream of the Ca(2+)-dependent membrane resealing process. Required for transport of DYSF to sites of cell injury during repair patch formation. Regulates membrane budding and exocytosis. May be involved in the regulation of the mobility of KCNB1-containing endocytic vesicles. The protein is Tripartite motif-containing protein 72 (trim72) of Xenopus laevis (African clawed frog).